We begin with the raw amino-acid sequence, 88 residues long: Small ribosomal subunit protein uS15c (88 aa).

Belongs to the universal ribosomal protein uS15 family. Part of the 30S ribosomal subunit.

The protein localises to the plastid. It localises to the chloroplast. The polypeptide is Small ribosomal subunit protein uS15c (rps15) (Draba nemorosa (Woodland whitlowgrass)).